We begin with the raw amino-acid sequence, 797 residues long: Xaa-Pro dipeptidyl-peptidase (797 aa).

Active-site charge relay system residues include S370, D490, and H521.

This sequence belongs to the peptidase S15 family. Homodimer.

The protein localises to the cytoplasm. It catalyses the reaction Hydrolyzes Xaa-Pro-|- bonds to release unblocked, N-terminal dipeptides from substrates including Ala-Pro-|-p-nitroanilide and (sequentially) Tyr-Pro-|-Phe-Pro-|-Gly-Pro-|-Ile.. Its function is as follows. Removes N-terminal dipeptides sequentially from polypeptides having unsubstituted N-termini provided that the penultimate residue is proline. This is Xaa-Pro dipeptidyl-peptidase from Lacticaseibacillus casei (strain BL23) (Lactobacillus casei).